The primary structure comprises 656 residues: DNA ligase (656 aa).

Residues 32 to 36, 81 to 82, and glutamate 112 contribute to the NAD(+) site; these read DEEYD and SM. The active-site N6-AMP-lysine intermediate is lysine 114. Residues arginine 135, glutamate 169, lysine 284, and lysine 308 each coordinate NAD(+). Zn(2+) contacts are provided by cysteine 402, cysteine 405, cysteine 418, and cysteine 423. Residues 577-656 enclose the BRCT domain; sequence VQKTPFTGKT…DMWKMLKEGK (80 aa).

The protein belongs to the NAD-dependent DNA ligase family. LigA subfamily. It depends on Mg(2+) as a cofactor. Requires Mn(2+) as cofactor.

It catalyses the reaction NAD(+) + (deoxyribonucleotide)n-3'-hydroxyl + 5'-phospho-(deoxyribonucleotide)m = (deoxyribonucleotide)n+m + AMP + beta-nicotinamide D-nucleotide.. Its function is as follows. DNA ligase that catalyzes the formation of phosphodiester linkages between 5'-phosphoryl and 3'-hydroxyl groups in double-stranded DNA using NAD as a coenzyme and as the energy source for the reaction. It is essential for DNA replication and repair of damaged DNA. In Nautilia profundicola (strain ATCC BAA-1463 / DSM 18972 / AmH), this protein is DNA ligase.